The following is a 306-amino-acid chain: UDP-3-O-acyl-N-acetylglucosamine deacetylase (306 aa).

Zn(2+) is bound by residues His79, His238, and Asp242. His265 serves as the catalytic Proton donor.

It belongs to the LpxC family. Zn(2+) is required as a cofactor.

The catalysed reaction is a UDP-3-O-[(3R)-3-hydroxyacyl]-N-acetyl-alpha-D-glucosamine + H2O = a UDP-3-O-[(3R)-3-hydroxyacyl]-alpha-D-glucosamine + acetate. The protein operates within glycolipid biosynthesis; lipid IV(A) biosynthesis; lipid IV(A) from (3R)-3-hydroxytetradecanoyl-[acyl-carrier-protein] and UDP-N-acetyl-alpha-D-glucosamine: step 2/6. Functionally, catalyzes the hydrolysis of UDP-3-O-myristoyl-N-acetylglucosamine to form UDP-3-O-myristoylglucosamine and acetate, the committed step in lipid A biosynthesis. This is UDP-3-O-acyl-N-acetylglucosamine deacetylase from Shewanella sp. (strain W3-18-1).